The following is a 452-amino-acid chain: Probable 1,4-beta-D-glucan cellobiohydrolase A (452 aa).

Positions 1–17 are cleaved as a signal peptide; the sequence is MHQRALLFSALLTAVRA. Residue Asn-62 is glycosylated (N-linked (GlcNAc...) asparagine). The Nucleophile role is filled by Glu-227. Glu-232 (proton donor) is an active-site residue. Residues Asn-285, Asn-335, Asn-402, and Asn-445 are each glycosylated (N-linked (GlcNAc...) asparagine).

This sequence belongs to the glycosyl hydrolase 7 (cellulase C) family.

The protein resides in the secreted. It carries out the reaction Hydrolysis of (1-&gt;4)-beta-D-glucosidic linkages in cellulose and cellotetraose, releasing cellobiose from the non-reducing ends of the chains.. The biological conversion of cellulose to glucose generally requires three types of hydrolytic enzymes: (1) Endoglucanases which cut internal beta-1,4-glucosidic bonds; (2) Exocellobiohydrolases that cut the disaccharide cellobiose from the non-reducing end of the cellulose polymer chain; (3) Beta-1,4-glucosidases which hydrolyze the cellobiose and other short cello-oligosaccharides to glucose. The chain is Probable 1,4-beta-D-glucan cellobiohydrolase A (cbhA) from Aspergillus niger (strain ATCC MYA-4892 / CBS 513.88 / FGSC A1513).